Consider the following 914-residue polypeptide: DNA mismatch repair protein MutS (914 aa).

Positions 28-74 (NTNSVKDSNLNDEELSKNAELRPRKRKKSVLLQNSVGEQTEDFSNDE) are disordered. An ATP-binding site is contributed by 726 to 733 (GPNASGKS).

The protein belongs to the DNA mismatch repair MutS family.

This protein is involved in the repair of mismatches in DNA. It is possible that it carries out the mismatch recognition step. This protein has a weak ATPase activity. The polypeptide is DNA mismatch repair protein MutS (Prochlorococcus marinus (strain SARG / CCMP1375 / SS120)).